Consider the following 1378-residue polypeptide: Tonsoku-like protein (1378 aa).

TPR repeat units follow at residues Ala27–Ala60, Ala67–Leu100, Gln107–Glu147, Thr162–Asn195, Phe202–Met235, Ser242–Lys275, Met311–Leu344, and Ala352–Asn385. Residues Ala475–Arg524 are disordered. Residues Glu481 to Glu509 show a composition bias toward acidic residues. A compositionally biased stretch (basic residues) spans Leu514–Asn523. 3 ANK repeats span residues Met528–Pro557, Cys561–Asp590, and Glu597–Leu626. The interval Ala667–Arg789 is disordered. Residues Asp672–Ser684 are compositionally biased toward polar residues. Residues Thr691–Pro702 are compositionally biased toward pro residues. Ser719 is modified (phosphoserine). Low complexity-rich tracts occupy residues Gly736–Ala753 and Ala777–Arg789. Residue Arg797 is modified to Omega-N-methylarginine. The disordered stretch occupies residues Leu842–Ile933. Polar residues-rich tracts occupy residues Cys883 to Ala899 and Ser907 to Ser918. LRR repeat units follow at residues His1069–Ala1093, Met1097–Leu1122, Leu1128–Ser1151, Ala1188–Ser1212, Gly1247–Arg1270, Cys1275–Thr1300, and Ala1331–Gln1354.

It belongs to the Tonsoku family. In terms of assembly, component of the MMS22L-TONSL complex, a complex at least composed of MMS22L and TONSL/NFKBIL2. Interacts with the MCM complex, the FACT complex and the RPA complex. Interacts with MCM5; the interaction is direct. Binds histones, with a strong preference for histone H3.1 (histones H3.1 and H3-4/H3.1t). Interacts (via ANK repeats) with histone H4; specifically binds histone H4 lacking methylation at 'Lys-20' (H4K20me0). May interact with DNAJC9; the interaction seems to be histone-dependent. As to expression, expressed in heart, skeletal muscle and tracheal epithelial cells.

It localises to the nucleus. The protein resides in the chromosome. The protein localises to the cytoplasm. Its function is as follows. Component of the MMS22L-TONSL complex, a complex that promotes homologous recombination-mediated repair of double-strand breaks (DSBs) at stalled or collapsed replication forks. The MMS22L-TONSL complex is required to maintain genome integrity during DNA replication. It mediates the assembly of RAD51 filaments on single-stranded DNA (ssDNA): the MMS22L-TONSL complex is recruited to DSBs following histone replacement by histone chaperones and eviction of the replication protein A complex (RPA/RP-A) from DSBs. Following recruitment to DSBs, the TONSL-MMS22L complex promotes recruitment of RAD51 filaments and subsequent homologous recombination. Within the complex, TONSL acts as a histone reader, which recognizes and binds newly synthesized histones following their replacement by histone chaperones. Specifically binds histone H4 lacking methylation at 'Lys-20' (H4K20me0) and histone H3.1. The chain is Tonsoku-like protein from Homo sapiens (Human).